We begin with the raw amino-acid sequence, 430 residues long: Enolase (430 aa).

A (2R)-2-phosphoglycerate-binding site is contributed by Q167. The active-site Proton donor is E209. 3 residues coordinate Mg(2+): D245, E286, and D313. Residues K338, R367, S368, and K389 each coordinate (2R)-2-phosphoglycerate. K338 (proton acceptor) is an active-site residue.

It belongs to the enolase family. The cofactor is Mg(2+).

The protein resides in the cytoplasm. The protein localises to the secreted. Its subcellular location is the cell surface. The enzyme catalyses (2R)-2-phosphoglycerate = phosphoenolpyruvate + H2O. It participates in carbohydrate degradation; glycolysis; pyruvate from D-glyceraldehyde 3-phosphate: step 4/5. In terms of biological role, catalyzes the reversible conversion of 2-phosphoglycerate (2-PG) into phosphoenolpyruvate (PEP). It is essential for the degradation of carbohydrates via glycolysis. This chain is Enolase, found in Parasynechococcus marenigrum (strain WH8102).